The following is a 267-amino-acid chain: Orotidine 5'-phosphate decarboxylase (267 aa).

Substrate is bound by residues Asp38, 60–62, 92–101, Tyr218, and Arg236; these read KTH and DRKFADIGNT. Lys94 (proton donor) is an active-site residue.

Belongs to the OMP decarboxylase family.

The enzyme catalyses orotidine 5'-phosphate + H(+) = UMP + CO2. Its pathway is pyrimidine metabolism; UMP biosynthesis via de novo pathway; UMP from orotate: step 2/2. The protein is Orotidine 5'-phosphate decarboxylase (URA3) of Debaryomyces hansenii (strain ATCC 36239 / CBS 767 / BCRC 21394 / JCM 1990 / NBRC 0083 / IGC 2968) (Yeast).